Consider the following 202-residue polypeptide: Nascent polypeptide-associated complex subunit alpha (202 aa).

The segment covering 1–19 (MADPRVEEIVEEETPKQTV) has biased composition (basic and acidic residues). A disordered region spans residues 1–41 (MADPRVEEIVEEETPKQTVEDAGSDSESEAGEANIPAGAAV). The region spanning 45 to 110 (SRNEKKARKA…AKIEDLNSQA (66 aa)) is the NAC-A/B domain. Residues 117-127 (QLAAAEAAAGE) are compositionally biased toward low complexity. The disordered stretch occupies residues 117–165 (QLAAAEAAAGEHAGHDHEHDLGTKVPEAETKKEEEEDDGEPVDESGLEA). Positions 128–149 (HAGHDHEHDLGTKVPEAETKKE) are enriched in basic and acidic residues. The segment covering 150 to 162 (EEEDDGEPVDESG) has biased composition (acidic residues). Positions 163-202 (LEAKDIELVMAQANVSRKKAVKALRENDNDIVNSIMALSI) constitute a UBA domain.

The protein belongs to the NAC-alpha family. In terms of assembly, part of the nascent polypeptide-associated complex (NAC), consisting of egd2 and egd1. NAC associates with ribosomes via egd1.

Its subcellular location is the cytoplasm. The protein resides in the nucleus. In terms of biological role, component of the nascent polypeptide-associated complex (NAC), a dynamic component of the ribosomal exit tunnel, protecting the emerging polypeptides from interaction with other cytoplasmic proteins to ensure appropriate nascent protein targeting. The NAC complex also promotes mitochondrial protein import by enhancing productive ribosome interactions with the outer mitochondrial membrane and blocks the inappropriate interaction of ribosomes translating non-secretory nascent polypeptides with translocation sites in the membrane of the endoplasmic reticulum. Egd2 may also be involved in transcription regulation. This chain is Nascent polypeptide-associated complex subunit alpha (egd2), found in Aspergillus oryzae (strain ATCC 42149 / RIB 40) (Yellow koji mold).